A 266-amino-acid polypeptide reads, in one-letter code: Phosphatidate cytidylyltransferase (266 aa).

The next 8 membrane-spanning stretches (helical) occupy residues 16 to 36 (FVLIIVADLILYADNLLLFWA), 52 to 72 (LFQVKASFSLYLILVLSWVAA), 78 to 98 (PIECALISAMVMASVIAYQKA), 101 to 121 (SEAILPFLYPGVGFFALFGVY), 125 to 145 (GAVAIIWLLVVVVASDVGAFF), 164 to 184 (LEGALIGVVLASVLGSFVGMG), 186 to 206 (LSGGFFMALFFSFLIALVAVF), and 237 to 257 (LDSMLFGALGLHALLYFLEIW).

Belongs to the CDS family.

The protein localises to the cell inner membrane. It catalyses the reaction a 1,2-diacyl-sn-glycero-3-phosphate + CTP + H(+) = a CDP-1,2-diacyl-sn-glycerol + diphosphate. Its pathway is phospholipid metabolism; CDP-diacylglycerol biosynthesis; CDP-diacylglycerol from sn-glycerol 3-phosphate: step 3/3. The sequence is that of Phosphatidate cytidylyltransferase (cdsA) from Helicobacter pylori (strain ATCC 700392 / 26695) (Campylobacter pylori).